The sequence spans 397 residues: Riboflavin biosynthesis protein RibBA (397 aa).

Residues 1–199 (MFHRIEEALE…IEDLIAYRRH (199 aa)) form a DHBP synthase region. D-ribulose 5-phosphate-binding positions include 26-27 (RE), Asp-31, 138-142 (RAGHT), and Glu-162. Position 27 (Glu-27) interacts with Mg(2+). Position 141 (His-141) interacts with Mg(2+). The segment at 200–397 (HETFVTKEVE…VTKLGHLLNL (198 aa)) is GTP cyclohydrolase II. GTP is bound at residue 250 to 254 (RVHSE). Cys-255, Cys-266, and Cys-268 together coordinate Zn(2+). Residues Gln-271, 293 to 295 (EGR), and Thr-315 each bind GTP. Asp-327 (proton acceptor; for GTP cyclohydrolase activity) is an active-site residue. Arg-329 serves as the catalytic Nucleophile; for GTP cyclohydrolase activity. GTP contacts are provided by Thr-350 and Lys-355.

It in the N-terminal section; belongs to the DHBP synthase family. The protein in the C-terminal section; belongs to the GTP cyclohydrolase II family. Mg(2+) is required as a cofactor. Requires Mn(2+) as cofactor. It depends on Zn(2+) as a cofactor.

It catalyses the reaction D-ribulose 5-phosphate = (2S)-2-hydroxy-3-oxobutyl phosphate + formate + H(+). It carries out the reaction GTP + 4 H2O = 2,5-diamino-6-hydroxy-4-(5-phosphoribosylamino)-pyrimidine + formate + 2 phosphate + 3 H(+). Its pathway is cofactor biosynthesis; riboflavin biosynthesis; 2-hydroxy-3-oxobutyl phosphate from D-ribulose 5-phosphate: step 1/1. The protein operates within cofactor biosynthesis; riboflavin biosynthesis; 5-amino-6-(D-ribitylamino)uracil from GTP: step 1/4. Functionally, catalyzes the conversion of D-ribulose 5-phosphate to formate and 3,4-dihydroxy-2-butanone 4-phosphate. Its function is as follows. Catalyzes the conversion of GTP to 2,5-diamino-6-ribosylamino-4(3H)-pyrimidinone 5'-phosphate (DARP), formate and pyrophosphate. The chain is Riboflavin biosynthesis protein RibBA from Bacillus cytotoxicus (strain DSM 22905 / CIP 110041 / 391-98 / NVH 391-98).